The following is a 251-amino-acid chain: Myozenin-3 (251 aa).

A Phosphoserine modification is found at serine 31. The segment at 50 to 67 is binding to ACTN2, PPP3CA and TCAP; it reads LLFQKRQRRVQKFTFELA. The binding to FLNC stretch occupies residues 67–110; that stretch reads AASQRAMLAGSARRKVTGTAESGTVANANGPEGPNYRSELHIFP. A disordered region spans residues 79–102; it reads RRKVTGTAESGTVANANGPEGPNY. Residues 186–207 are binding to ACTN2; that stretch reads PSPNDYRNFNKTPVPFGGPLVG.

It belongs to the myozenin family. As to quaternary structure, interacts with ACTN2, LDB3, FLNC, PPP3CA and TCAP. Expressed specifically in skeletal muscle. Not detected in heart.

The protein localises to the cytoplasm. The protein resides in the myofibril. Its subcellular location is the sarcomere. It is found in the z line. In terms of biological role, myozenins may serve as intracellular binding proteins involved in linking Z line proteins such as alpha-actinin, gamma-filamin, TCAP/telethonin, LDB3/ZASP and localizing calcineurin signaling to the sarcomere. Plays an important role in the modulation of calcineurin signaling. May play a role in myofibrillogenesis. The chain is Myozenin-3 from Homo sapiens (Human).